A 55-amino-acid polypeptide reads, in one-letter code: Protein CADMIUM TOLERANCE 1 (55 aa).

Residues 24-40 (GCLYACIFTALCCFCCY) form a helical membrane-spanning segment.

This sequence belongs to the CYSTM1 family.

Its subcellular location is the cell membrane. It localises to the secreted. The protein resides in the cell wall. Functionally, confers resistance to heavy metal ions (e.g. cadmium (CdCl(2)) and copper (CuCl(2))) by chelating them at the plasma membrane of root cells, thus stopping their entry and reducing their accumulation. This Echinochloa crus-galli subsp. caudata (Cockspur) protein is Protein CADMIUM TOLERANCE 1.